The sequence spans 387 residues: Flap endonuclease 1 (387 aa).

Positions 1–104 (MGILGLSKLI…GELAKRAERR (104 aa)) are N-domain. Residue aspartate 34 coordinates Mg(2+). Arginine 47 and arginine 70 together coordinate DNA. 5 residues coordinate Mg(2+): aspartate 86, glutamate 158, glutamate 160, aspartate 179, and aspartate 181. The interval 122–253 (GIEKFNRRLV…KRAIELINNY (132 aa)) is I-domain. Position 158 (glutamate 158) interacts with DNA. DNA is bound by residues glycine 231 and aspartate 233. Mg(2+) is bound at residue aspartate 233. The interval 336-344 (TQVRLDSFF) is interaction with PCNA. The tract at residues 345–387 (KTLPSTPNATNAAKRKAEEAKKSANNKKAKTSGGGGGRGRRPK) is disordered.

This sequence belongs to the XPG/RAD2 endonuclease family. FEN1 subfamily. In terms of assembly, interacts with PCNA. Three molecules of FEN1 bind to one PCNA trimer with each molecule binding to one PCNA monomer. PCNA stimulates the nuclease activity without altering cleavage specificity. Mg(2+) is required as a cofactor. Phosphorylated. Phosphorylation upon DNA damage induces relocalization to the nuclear plasma.

It localises to the nucleus. Its subcellular location is the nucleolus. It is found in the nucleoplasm. The protein resides in the mitochondrion. Functionally, structure-specific nuclease with 5'-flap endonuclease and 5'-3' exonuclease activities involved in DNA replication and repair. During DNA replication, cleaves the 5'-overhanging flap structure that is generated by displacement synthesis when DNA polymerase encounters the 5'-end of a downstream Okazaki fragment. It enters the flap from the 5'-end and then tracks to cleave the flap base, leaving a nick for ligation. Also involved in the long patch base excision repair (LP-BER) pathway, by cleaving within the apurinic/apyrimidinic (AP) site-terminated flap. Acts as a genome stabilization factor that prevents flaps from equilibrating into structures that lead to duplications and deletions. Also possesses 5'-3' exonuclease activity on nicked or gapped double-stranded DNA, and exhibits RNase H activity. Also involved in replication and repair of rDNA and in repairing mitochondrial DNA. The chain is Flap endonuclease 1 from Drosophila yakuba (Fruit fly).